We begin with the raw amino-acid sequence, 187 residues long: Chlorobenzene dioxygenase subunit beta (187 aa).

The protein belongs to the bacterial ring-hydroxylating dioxygenase beta subunit family. This dioxygenase system consists of four proteins: the two subunits of the oxygenase component (TecA1 and TecA2), a ferredoxin (TecA3) and a ferredoxin reductase (TecA4).

The enzyme catalyses chlorobenzene + NADH + O2 + H(+) = (1R,2R)-3-chlorocyclohexa-3,5-diene-1,2-diol + NAD(+). It participates in aromatic compound metabolism. In terms of biological role, part of the oxygenase component of the chlorobenzene dioxygenase system that catalyzes the dihydroxylation of a range of aromatic compounds, including chlorinated benzenes and toluenes, and dinuclear aromatics such as biphenyl and dibenzo-p-dioxin. The beta subunit is not directly involved in the control of substrate specificity. The sequence is that of Chlorobenzene dioxygenase subunit beta from Cupriavidus sp. (strain PS12).